The following is a 215-amino-acid chain: Probable phosphoglycerate mutase GpmB (215 aa).

Substrate-binding positions include 8 to 15, 21 to 22, Arg-58, Arg-60, 82 to 85, and 151 to 152; these read RHGETEWN, QG, ELHM, and GI. His-9 serves as the catalytic Tele-phosphohistidine intermediate. The Proton donor/acceptor role is filled by Glu-82.

Belongs to the phosphoglycerate mutase family. GpmB subfamily.

The enzyme catalyses (2R)-2-phosphoglycerate = (2R)-3-phosphoglycerate. It participates in carbohydrate degradation; glycolysis; pyruvate from D-glyceraldehyde 3-phosphate: step 3/5. The sequence is that of Probable phosphoglycerate mutase GpmB from Serratia proteamaculans (strain 568).